The following is an 87-amino-acid chain: Small ribosomal subunit protein uS15 (87 aa).

The tract at residues 1 to 22 (MSEINKAEIVASNARAPSDTGS) is disordered.

It belongs to the universal ribosomal protein uS15 family. Part of the 30S ribosomal subunit. Forms a bridge to the 50S subunit in the 70S ribosome, contacting the 23S rRNA.

One of the primary rRNA binding proteins, it binds directly to 16S rRNA where it helps nucleate assembly of the platform of the 30S subunit by binding and bridging several RNA helices of the 16S rRNA. Functionally, forms an intersubunit bridge (bridge B4) with the 23S rRNA of the 50S subunit in the ribosome. The protein is Small ribosomal subunit protein uS15 of Leptothrix cholodnii (strain ATCC 51168 / LMG 8142 / SP-6) (Leptothrix discophora (strain SP-6)).